We begin with the raw amino-acid sequence, 50 residues long: Omwaprin-a (50 aa).

The 45-residue stretch at 3-47 folds into the WAP domain; that stretch reads RPKKPGLCPPRPQKPCVKECKNDDSCPGQQKCCNYGCKDECRDPI. Intrachain disulfides connect Cys10–Cys35, Cys18–Cys39, Cys22–Cys34, and Cys28–Cys43.

It belongs to the venom waprin family. In terms of tissue distribution, expressed by the venom gland.

It localises to the secreted. Its function is as follows. Damages membranes of susceptible bacteria. Has antibacterial activity against the Gram-positive bacteria B.megaterium and S.warneri. After a 45-minute treatment with this protein, B.megaterium have no visible pili and are smooth. Has no antibacterial activity against the Gram-positive bacteria B.thuringiensis, S.aureus, S.clavuligerus and B.anthracis, or the Gram-negative bacteria E.coli and A.tumefaciens. Has no hemolytic activity. Does not inhibit the proteinases elastase and cathepsin G. Is not toxic to mice. The polypeptide is Omwaprin-a (Oxyuranus microlepidotus (Inland taipan)).